A 249-amino-acid chain; its full sequence is Tetraspanin-7 (249 aa).

Residues 1–16 (MASRRMETKPVITCLK) are Cytoplasmic-facing. Residues 17–40 (TLLIIYSFVFWITGVILLAVGVWG) traverse the membrane as a helical segment. The Extracellular segment spans residues 41–56 (KLTLGTYISLIAENST). A glycan (N-linked (GlcNAc...) asparagine) is linked at asparagine 54. Residues 57-75 (NAPYVLIGTGTTIVVFGLF) form a helical membrane-spanning segment. Over 76–86 (GCFATCRGSPW) the chain is Cytoplasmic. The helical transmembrane segment at 87 to 112 (MLKLYAMFLSLVFLAELVAGISGFVF) threads the bilayer. Topologically, residues 113 to 213 (RHEIKDTFLR…LVTSFMETNM (101 aa)) are extracellular. N-linked (GlcNAc...) asparagine glycans are attached at residues asparagine 155, asparagine 158, asparagine 177, and asparagine 188. A helical transmembrane segment spans residues 214 to 234 (GIIAGVAFGIAFSQLIGMLLA). Residues 235–249 (CCLSRFITANQYEMV) are Cytoplasmic-facing.

The protein belongs to the tetraspanin (TM4SF) family. As to quaternary structure, (Microbial infection) Interacts with herpes simplex virus 1 (HHV-1) UL35. In terms of tissue distribution, not solely expressed in T-cells. Expressed in acute myelocytic leukemia cells of some patients.

Its subcellular location is the membrane. May be involved in cell proliferation and cell motility. In Homo sapiens (Human), this protein is Tetraspanin-7 (TSPAN7).